We begin with the raw amino-acid sequence, 1396 residues long: ATP-dependent helicase/nuclease subunit A (1396 aa).

The disordered stretch occupies residues 1–25 (MNREALCHDDPIGHDRLRPDSIPRD). The UvrD-like helicase ATP-binding domain occupies 26–532 (PKWTDEQWQA…IDLAKNFRSR (507 aa)). Position 47–54 (47–54 (AAAGAGKT)) interacts with ATP. 2 disordered regions span residues 590–649 (DADG…GQPT) and 1171–1205 (HSPE…PSPD). A UvrD-like helicase C-terminal domain is found at 615–920 (HKNIAKAGES…RIMSIHKSKG (306 aa)). A compositionally biased stretch (low complexity) spans 1181–1199 (TPPSLEIPPSLETPPSLET).

It belongs to the helicase family. AddA subfamily. In terms of assembly, heterodimer of AddA and AddB/RexB. It depends on Mg(2+) as a cofactor.

The enzyme catalyses Couples ATP hydrolysis with the unwinding of duplex DNA by translocating in the 3'-5' direction.. It carries out the reaction ATP + H2O = ADP + phosphate + H(+). The heterodimer acts as both an ATP-dependent DNA helicase and an ATP-dependent, dual-direction single-stranded exonuclease. Recognizes the chi site generating a DNA molecule suitable for the initiation of homologous recombination. The AddA nuclease domain is required for chi fragment generation; this subunit has the helicase and 3' -&gt; 5' nuclease activities. This is ATP-dependent helicase/nuclease subunit A from Heliobacterium modesticaldum (strain ATCC 51547 / Ice1).